We begin with the raw amino-acid sequence, 126 residues long: Alpha-1-purothionin (126 aa).

A signal peptide spans 1–16 (CLLILGLVLEQLQVEG). Cystine bridges form between Cys-19–Cys-55, Cys-20–Cys-47, Cys-28–Cys-45, and Cys-32–Cys-41. Positions 62–126 (LALESNSDEP…DAGLPSLDAY (65 aa)) are cleaved as a propeptide — acidic domain.

This sequence belongs to the plant thionin (TC 1.C.44) family. 4 C-C subfamily.

The protein localises to the secreted. In terms of biological role, thionins are small plant proteins which are toxic to animal cells. They seem to exert their toxic effect at the level of the cell membrane. Their precise function is not known. This chain is Alpha-1-purothionin (THI1.1), found in Triticum aestivum (Wheat).